The following is a 77-amino-acid chain: Large ribosomal subunit protein bL28 (77 aa).

The protein belongs to the bacterial ribosomal protein bL28 family.

The chain is Large ribosomal subunit protein bL28 from Polynucleobacter asymbioticus (strain DSM 18221 / CIP 109841 / QLW-P1DMWA-1) (Polynucleobacter necessarius subsp. asymbioticus).